We begin with the raw amino-acid sequence, 369 residues long: Biglycan (369 aa).

The signal sequence occupies residues 1–16 (MCPLWLLTLLLALSQA). Positions 17–37 (LPFEQKGFWDFTLDDGLLMMN) are excised as a propeptide. 2 O-linked (Xyl...) (glycosaminoglycan) serine glycosylation sites follow: S42 and S48. 2 disulfides stabilise this stretch: C64/C70 and C68/C77. 12 LRR repeats span residues 83-103 (KTVPKEISPDTTLLDLQNNDI), 104-127 (SELRKDDFKGLQHLYALVLVNNKI), 128-151 (SKIHEKAFSPLRKLQKLYISKNHL), 152-172 (VEIPPNLPSSLVELRIHDNRI), 173-196 (RKVPKGVFSGLRNMNCIEMGGNPL), 197-221 (ENSGFEPGAFDGLKLNYLRISEAKL), 222-242 (TGIPKDLPETLNELHLDHNKI), 243-266 (QAIELEDLLRYSKLYRLGLGHNQI), 267-290 (RMIENGSLSFLPTLRELHLDNNKL), 291-313 (SRVPAGLPDLKLLQVVYLHSNNI), 314-343 (TKVGINDFCPMGFGVKRAYYNGISLFNNPV), and 344-369 (PYWEVQPATFRCVTDRLAIQFGNYKK). Residues N271 and N312 are each glycosylated (N-linked (GlcNAc...) asparagine). C322 and C355 are disulfide-bonded.

Belongs to the small leucine-rich proteoglycan (SLRP) family. SLRP class I subfamily. The two attached glycosaminoglycan chains can be either chondroitin sulfate or dermatan sulfate. In terms of tissue distribution, found in several connective tissues, especially in articular cartilages.

The protein localises to the secreted. Its subcellular location is the extracellular space. It localises to the extracellular matrix. May be involved in collagen fiber assembly. The sequence is that of Biglycan (Bgn) from Mus musculus (Mouse).